Consider the following 803-residue polypeptide: Myb-like protein V (803 aa).

Disordered stretches follow at residues 237-333 (SNIY…LPGL) and 429-803 (KSTS…SRRK). Residues 258-323 (DANDKNENNN…ENNKNKRTKS (66 aa)) are a coiled coil. Positions 271-294 (DDADDAAADDADDADDDDMDDESD) are enriched in acidic residues. Residues 295-315 (SNNNNKNSNNKNSNNKNSNEN) are compositionally biased toward low complexity. Residues 332–379 (GLWTDEECRSLIKAVMIIGHRWIKIKEDYYSTSKRKPSQLKDKMRSLR) enclose the Myb-like domain. Coiled coils occupy residues 400-429 (EIEKLAVLFQQKEEAQKLAKEKIDSLSNIK) and 463-496 (NNEDNQNESESENEDENDNNEKEKEKRNKKNSAV). Polar residues predominate over residues 429-438 (KSTSNTSAAS). Composition is skewed to acidic residues over residues 448-480 (NDSDEEVDQDSDNDSNNEDNQNESESENEDEND) and 510-533 (EEEESDEEHNDSEEDSQEDSEENE). 2 stretches are compositionally biased toward basic residues: residues 537-553 (KQKRKSNQIKSSPKKLK) and 568-577 (HKSKLKSKPQ). The stretch at 573–616 (KSKPQRKVEKEESEKEESEEEESEEEEEEDDEDYESEEDKKKKK) forms a coiled coil. Over residues 586-609 (EKEESEEEESEEEEEEDDEDYESE) the composition is skewed to acidic residues. 2 stretches are compositionally biased toward low complexity: residues 625–636 (TSTHTTTTTTTT) and 666–733 (KKSN…PTKK). The segment covering 786-795 (LNKDSKENKK) has biased composition (basic and acidic residues).

This Dictyostelium discoideum (Social amoeba) protein is Myb-like protein V (mybV).